The chain runs to 347 residues: Probable dual-specificity RNA methyltransferase RlmN (347 aa).

Glu91 serves as the catalytic Proton acceptor. The Radical SAM core domain maps to 97 to 327 (YKYGNSICVS…ATVRREMGSD (231 aa)). Cys104 and Cys332 are joined by a disulfide. Residues Cys111, Cys115, and Cys118 each contribute to the [4Fe-4S] cluster site. S-adenosyl-L-methionine-binding positions include 158 to 159 (GE), Ser190, 213 to 215 (SLH), and Asn289. Catalysis depends on Cys332, which acts as the S-methylcysteine intermediate.

This sequence belongs to the radical SAM superfamily. RlmN family. [4Fe-4S] cluster is required as a cofactor.

The protein resides in the cytoplasm. It carries out the reaction adenosine(2503) in 23S rRNA + 2 reduced [2Fe-2S]-[ferredoxin] + 2 S-adenosyl-L-methionine = 2-methyladenosine(2503) in 23S rRNA + 5'-deoxyadenosine + L-methionine + 2 oxidized [2Fe-2S]-[ferredoxin] + S-adenosyl-L-homocysteine. It catalyses the reaction adenosine(37) in tRNA + 2 reduced [2Fe-2S]-[ferredoxin] + 2 S-adenosyl-L-methionine = 2-methyladenosine(37) in tRNA + 5'-deoxyadenosine + L-methionine + 2 oxidized [2Fe-2S]-[ferredoxin] + S-adenosyl-L-homocysteine. Functionally, specifically methylates position 2 of adenine 2503 in 23S rRNA and position 2 of adenine 37 in tRNAs. The polypeptide is Probable dual-specificity RNA methyltransferase RlmN (Clostridium perfringens (strain 13 / Type A)).